The primary structure comprises 429 residues: UDP-N-acetylglucosamine 1-carboxyvinyltransferase (429 aa).

Residue 22 to 23 (KN) coordinates phosphoenolpyruvate. Arg102 serves as a coordination point for UDP-N-acetyl-alpha-D-glucosamine. The active-site Proton donor is Cys126. A 2-(S-cysteinyl)pyruvic acid O-phosphothioketal modification is found at Cys126. Residues 131-135 (RPVDL), Asp316, and Ile338 each bind UDP-N-acetyl-alpha-D-glucosamine.

Belongs to the EPSP synthase family. MurA subfamily.

The protein resides in the cytoplasm. It catalyses the reaction phosphoenolpyruvate + UDP-N-acetyl-alpha-D-glucosamine = UDP-N-acetyl-3-O-(1-carboxyvinyl)-alpha-D-glucosamine + phosphate. Its pathway is cell wall biogenesis; peptidoglycan biosynthesis. Functionally, cell wall formation. Adds enolpyruvyl to UDP-N-acetylglucosamine. This Rhodopseudomonas palustris (strain BisB18) protein is UDP-N-acetylglucosamine 1-carboxyvinyltransferase.